The primary structure comprises 68 residues: Prokaryotic ubiquitin-like protein Pup (68 aa).

The interval 1–37 (MAQERIFGTGSRREDEPDTPAPVDPPVSGAAQAQRDM) is disordered. An ARC ATPase binding region spans residues 24–62 (DPPVSGAAQAQRDMQGTDDLLAEIDGVLETNAEAFVKGF). Q68 carries the post-translational modification Deamidated glutamine. Q68 is covalently cross-linked (Isoglutamyl lysine isopeptide (Gln-Lys) (interchain with K-? in acceptor proteins)).

Belongs to the prokaryotic ubiquitin-like protein family. In terms of assembly, strongly interacts with the proteasome-associated ATPase ARC through a hydrophobic interface; the interacting region of Pup lies in its C-terminal half. There is one Pup binding site per ARC hexamer ring. Post-translationally, is modified by deamidation of its C-terminal glutamine to glutamate by the deamidase Dop, a prerequisite to the subsequent pupylation process.

It functions in the pathway protein degradation; proteasomal Pup-dependent pathway. Functionally, protein modifier that is covalently attached to lysine residues of substrate proteins, thereby targeting them for proteasomal degradation. The tagging system is termed pupylation. The protein is Prokaryotic ubiquitin-like protein Pup of Kocuria rhizophila (strain ATCC 9341 / DSM 348 / NBRC 103217 / DC2201).